A 343-amino-acid polypeptide reads, in one-letter code: Probable dual-specificity RNA methyltransferase RlmN (343 aa).

Glu-92 functions as the Proton acceptor in the catalytic mechanism. The Radical SAM core domain occupies 98 to 328 (YHHGLTACIS…TTVRREMGAD (231 aa)). Cys-105 and Cys-333 form a disulfide bridge. [4Fe-4S] cluster-binding residues include Cys-112, Cys-116, and Cys-119. S-adenosyl-L-methionine contacts are provided by residues 159 to 160 (GE), Ser-191, 214 to 216 (SLH), and Asn-290. Catalysis depends on Cys-333, which acts as the S-methylcysteine intermediate.

The protein belongs to the radical SAM superfamily. RlmN family. The cofactor is [4Fe-4S] cluster.

Its subcellular location is the cytoplasm. The catalysed reaction is adenosine(2503) in 23S rRNA + 2 reduced [2Fe-2S]-[ferredoxin] + 2 S-adenosyl-L-methionine = 2-methyladenosine(2503) in 23S rRNA + 5'-deoxyadenosine + L-methionine + 2 oxidized [2Fe-2S]-[ferredoxin] + S-adenosyl-L-homocysteine. The enzyme catalyses adenosine(37) in tRNA + 2 reduced [2Fe-2S]-[ferredoxin] + 2 S-adenosyl-L-methionine = 2-methyladenosine(37) in tRNA + 5'-deoxyadenosine + L-methionine + 2 oxidized [2Fe-2S]-[ferredoxin] + S-adenosyl-L-homocysteine. Its function is as follows. Specifically methylates position 2 of adenine 2503 in 23S rRNA and position 2 of adenine 37 in tRNAs. The chain is Probable dual-specificity RNA methyltransferase RlmN from Alkaliphilus oremlandii (strain OhILAs) (Clostridium oremlandii (strain OhILAs)).